A 192-amino-acid polypeptide reads, in one-letter code: SRP-independent targeting protein 2 homolog (192 aa).

2 helical membrane-spanning segments follow: residues 16–36 and 102–122; these read ILTF…ILRF and WILI…YLLV. The tract at residues 149 to 192 is disordered; sequence LNQPPQQQQQQQQQQHQQHATPSEPVLSKRQQKLRKKAAKYSRP. Low complexity predominate over residues 151 to 167; the sequence is QPPQQQQQQQQQQHQQH. Basic residues predominate over residues 178–192; the sequence is RQQKLRKKAAKYSRP.

The protein belongs to the TMEM208 family.

It localises to the endoplasmic reticulum membrane. In terms of biological role, may function in a SRP (signal recognition particle) and GET (guided entry of tail-anchored proteins) independent pathway for targeting a broad range of substrate proteins to the endoplasmic reticulum. Has a role in meiosis. The chain is SRP-independent targeting protein 2 homolog from Schizosaccharomyces pombe (strain 972 / ATCC 24843) (Fission yeast).